The primary structure comprises 478 residues: Cytochrome c-552 (478 aa).

An N-terminal signal peptide occupies residues 1–26; it reads MARKTLRARRFFSLIFPFFFITSVYA. H94 contributes to the heme c binding site. C122, C125, and K126 together coordinate heme. Heme c contacts are provided by C160, C163, H164, C209, C212, and H213. Residues E215, Y216, K261, and Q263 each contribute to the Ca(2+) site. Substrate is bound at residue Y216. H264 is a substrate binding site. Residues H275, C282, C285, H286, H301, C314, C317, H318, and H393 each contribute to the heme c site.

This sequence belongs to the cytochrome c-552 family. Ca(2+) serves as cofactor. The cofactor is heme c.

Its subcellular location is the periplasm. It carries out the reaction 6 Fe(III)-[cytochrome c] + NH4(+) + 2 H2O = 6 Fe(II)-[cytochrome c] + nitrite + 8 H(+). Its pathway is nitrogen metabolism; nitrate reduction (assimilation). Catalyzes the reduction of nitrite to ammonia, consuming six electrons in the process. This is Cytochrome c-552 from Salmonella paratyphi A (strain ATCC 9150 / SARB42).